Reading from the N-terminus, the 135-residue chain is Transcriptional activator protein (135 aa).

The short motif at 17 to 32 (KVTHRQVKKRAIRRRR) is the Nuclear localization signal element. The segment at 37-54 (CGCSYYLHINCFNHGFTH) is a zinc-finger region. Polar residues predominate over residues 77–88 (VFHNHQAPTTTI). Residues 77 to 117 (VFHNHQAPTTTIPAEPGHHNSPGSIQSQPEEGAGDSQMFSQ) are disordered. The tract at residues 120-135 (DLDNLTASDWSFLKGL) is transactivation.

The protein belongs to the geminiviridae transcriptional activator protein family. Monomer. Homodimer. Homooligomer. Self-interaction correlates with nuclear localization and efficient activation of transcription. Monomers suppress local silencing by interacting with and inactivating host adenosine kinase 2 (ADK2) in the cytoplasm. Interacts with and inhibits host SNF1 kinase. Binds to ssDNA. Phosphorylated.

The protein localises to the host nucleus. It localises to the host cytoplasm. In terms of biological role, strong activator of the late viral genes promoters. Enhances the expression of the capsid protein and nuclear shuttle protein. Acts as a suppressor of RNA-mediated gene silencing, also known as post-transcriptional gene silencing (PTGS), a mechanism of plant viral defense that limits the accumulation of viral RNAs. Suppresses the host RNA silencing by inhibiting adenosine kinase 2 (ADK2), a kinase involved in a general methylation pathway. Also suppresses the host basal defense by interacting with and inhibiting SNF1 kinase, a key regulator of cell metabolism implicated in innate antiviral defense. Determines pathogenicity. This is Transcriptional activator protein from Hewittia sublobata (Coralbush).